The following is a 299-amino-acid chain: ATP phosphoribosyltransferase (299 aa).

It belongs to the ATP phosphoribosyltransferase family. Long subfamily. Equilibrium between an active dimeric form, an inactive hexameric form and higher aggregates. Interconversion between the various forms is largely reversible and is influenced by the natural substrates and inhibitors of the enzyme. Mg(2+) is required as a cofactor.

The protein resides in the cytoplasm. The catalysed reaction is 1-(5-phospho-beta-D-ribosyl)-ATP + diphosphate = 5-phospho-alpha-D-ribose 1-diphosphate + ATP. The protein operates within amino-acid biosynthesis; L-histidine biosynthesis; L-histidine from 5-phospho-alpha-D-ribose 1-diphosphate: step 1/9. With respect to regulation, feedback inhibited by histidine. Functionally, catalyzes the condensation of ATP and 5-phosphoribose 1-diphosphate to form N'-(5'-phosphoribosyl)-ATP (PR-ATP). Has a crucial role in the pathway because the rate of histidine biosynthesis seems to be controlled primarily by regulation of HisG enzymatic activity. The chain is ATP phosphoribosyltransferase from Pectobacterium carotovorum subsp. carotovorum (strain PC1).